The primary structure comprises 35 residues: MEALVYTFLLVSTLGIIFFAIFFREPPKLPTKGGK.

The chain crosses the membrane as a helical span at residues 3 to 23 (ALVYTFLLVSTLGIIFFAIFF).

Belongs to the PsbT family. As to quaternary structure, PSII is composed of 1 copy each of membrane proteins PsbA, PsbB, PsbC, PsbD, PsbE, PsbF, PsbH, PsbI, PsbJ, PsbK, PsbL, PsbM, PsbT, PsbY, PsbZ, Psb30/Ycf12, at least 3 peripheral proteins of the oxygen-evolving complex and a large number of cofactors. It forms dimeric complexes.

It localises to the plastid. It is found in the chloroplast thylakoid membrane. Its function is as follows. Found at the monomer-monomer interface of the photosystem II (PS II) dimer, plays a role in assembly and dimerization of PSII. PSII is a light-driven water plastoquinone oxidoreductase, using light energy to abstract electrons from H(2)O, generating a proton gradient subsequently used for ATP formation. The chain is Photosystem II reaction center protein T from Pinus thunbergii (Japanese black pine).